The sequence spans 472 residues: Tryptophanase (472 aa).

Lys-270 is subject to N6-(pyridoxal phosphate)lysine.

The protein belongs to the beta-eliminating lyase family. As to quaternary structure, homotetramer. Requires pyridoxal 5'-phosphate as cofactor.

The catalysed reaction is L-tryptophan + H2O = indole + pyruvate + NH4(+). It participates in amino-acid degradation; L-tryptophan degradation via pyruvate pathway; indole and pyruvate from L-tryptophan: step 1/1. The polypeptide is Tryptophanase (tnaA) (Haemophilus influenzae).